The following is a 154-amino-acid chain: MAKDKKDHKHSGSTEDEYDSYLPALMPIAKPLAPKKLNKKMMKTVKKASKQKHILRGVKEVVKAVRKGEKGLVILAGDISPMDVISHIPVLCEDNNVPYLYTVSKELLGEASNTKRPTSCVMIVPGGKKKDMSKVEEYKESYEEIIKEVPALEV.

At Ser-119 the chain carries Phosphoserine.

It belongs to the eukaryotic ribosomal protein eL8 family. As to quaternary structure, component of the small nucleolar ribonucleoprotein particles containing H/ACA-type snoRNAs (H/ACA snoRNPs).

The protein localises to the nucleus. Its subcellular location is the nucleolus. In terms of biological role, non-catalytic component of the H/ACA small nucleolar ribonucleoprotein (H/ACA snoRNP), which catalyzes pseudouridylation of rRNA and is required for ribosome biogenesis. This involves the isomerization of uridine such that the ribose is subsequently attached to C5, instead of the normal N1. Pseudouridine ('psi') residues may serve to stabilize the conformation of rRNAs. The H/ACA snoRNP complex also mediates pseudouridylation of other types of RNAs. The H/ACA snoRNP complex mediates pseudouridylation at position 93 in U2 snRNA. Directly binds H/ACA snoRNAs. The polypeptide is H/ACA ribonucleoprotein complex subunit nhp2 (nhp2) (Schizosaccharomyces pombe (strain 972 / ATCC 24843) (Fission yeast)).